We begin with the raw amino-acid sequence, 86 residues long: Small ribosomal subunit protein bS20 (86 aa).

The tract at residues 1 to 23 (MANIKSSKKDSIKSRKKKKLNAS) is disordered.

Belongs to the bacterial ribosomal protein bS20 family.

Binds directly to 16S ribosomal RNA. The chain is Small ribosomal subunit protein bS20 from Buchnera aphidicola subsp. Baizongia pistaciae (strain Bp).